The sequence spans 236 residues: Uridylate kinase (236 aa).

8-11 (KLSG) serves as a coordination point for ATP. Residues 16–21 (GEQGYG) are involved in allosteric activation by GTP. ATP is bound by residues G51 and R55. Residues D70 and 131–138 (TGNPYFST) contribute to the UMP site. Positions 159, 165, and 168 each coordinate ATP.

It belongs to the UMP kinase family. In terms of assembly, homohexamer.

It localises to the cytoplasm. The enzyme catalyses UMP + ATP = UDP + ADP. It participates in pyrimidine metabolism; CTP biosynthesis via de novo pathway; UDP from UMP (UMPK route): step 1/1. Its activity is regulated as follows. Allosterically activated by GTP. Inhibited by UTP. In terms of biological role, catalyzes the reversible phosphorylation of UMP to UDP. This is Uridylate kinase from Shouchella clausii (strain KSM-K16) (Alkalihalobacillus clausii).